A 316-amino-acid chain; its full sequence is HTH-type transcriptional regulator cbl (316 aa).

Residues 1–59 form the HTH lysR-type domain; the sequence is MNFQQLKIIREAARQDYNLTEVANMLYTSQSGVSRHIRELEEELGIEIFIRRGKRLLGM. Residues 19–38 constitute a DNA-binding region (H-T-H motif); sequence LTEVANMLYTSQSGVSRHIR.

Belongs to the LysR transcriptional regulatory family.

May be an accessory regulatory protein within the cys regulon. The protein is HTH-type transcriptional regulator cbl (cbl) of Klebsiella aerogenes (Enterobacter aerogenes).